The primary structure comprises 139 residues: D-ribose pyranase (139 aa).

His20 serves as the catalytic Proton donor. Substrate is bound by residues Asp28, His106, and 128-130 (FAN).

This sequence belongs to the RbsD / FucU family. RbsD subfamily. As to quaternary structure, homodecamer.

The protein localises to the cytoplasm. It catalyses the reaction beta-D-ribopyranose = beta-D-ribofuranose. It functions in the pathway carbohydrate metabolism; D-ribose degradation; D-ribose 5-phosphate from beta-D-ribopyranose: step 1/2. Functionally, catalyzes the interconversion of beta-pyran and beta-furan forms of D-ribose. The polypeptide is D-ribose pyranase (Yersinia pseudotuberculosis serotype O:1b (strain IP 31758)).